A 714-amino-acid chain; its full sequence is DNA ligase (714 aa).

NAD(+)-binding positions include 47 to 51 (DAAYD), 96 to 97 (SL), and glutamate 130. Residue lysine 132 is the N6-AMP-lysine intermediate of the active site. NAD(+) is bound by residues arginine 153, glutamate 190, lysine 306, and lysine 330. 4 residues coordinate Zn(2+): cysteine 435, cysteine 438, cysteine 453, and cysteine 459. The region spanning 636–714 (RNDSAVAGKT…EDEWLKLIEG (79 aa)) is the BRCT domain.

This sequence belongs to the NAD-dependent DNA ligase family. LigA subfamily. The cofactor is Mg(2+). Mn(2+) is required as a cofactor.

It catalyses the reaction NAD(+) + (deoxyribonucleotide)n-3'-hydroxyl + 5'-phospho-(deoxyribonucleotide)m = (deoxyribonucleotide)n+m + AMP + beta-nicotinamide D-nucleotide.. Functionally, DNA ligase that catalyzes the formation of phosphodiester linkages between 5'-phosphoryl and 3'-hydroxyl groups in double-stranded DNA using NAD as a coenzyme and as the energy source for the reaction. It is essential for DNA replication and repair of damaged DNA. This is DNA ligase from Nitrobacter hamburgensis (strain DSM 10229 / NCIMB 13809 / X14).